The following is a 330-amino-acid chain: G-protein coupled receptor 157 (330 aa).

The Extracellular portion of the chain corresponds to 1-15 (MPSPAPPTELLPWER). Residues 16 to 36 (AVVLLSCALSALGSGLLVATH) traverse the membrane as a helical segment. Over 37-48 (ALWPDLRSRARR) the chain is Cytoplasmic. Residues 49-69 (LLLFLSLADLLSAASYFYGVL) form a helical membrane-spanning segment. Residues 70–87 (QDFAGTSWDCVLQGALST) lie on the Extracellular side of the membrane. Residues 88–108 (FANTSSFFWTVAIALYLYLSI) traverse the membrane as a helical segment. The Cytoplasmic segment spans residues 109-119 (VRTTRGPSTDH). Residues 120 to 140 (LIWAFHLISWGVPLAITVAAV) traverse the membrane as a helical segment. The Extracellular segment spans residues 141-166 (SLKKIGYDASDVSVGWCWINLEAEDR). Residues 167 to 187 (VLWMLLTGKLWEMLAYILLPL) traverse the membrane as a helical segment. Residues 188–227 (LYLLVRKHINRAHQALSEYRPICEGRQLQRGSSTSTADKK) are Cytoplasmic-facing. A helical membrane pass occupies residues 228 to 248 (LVLIPLIFICLRVWSTVRFVL). Residues 249–259 (TLCGSPAVQTP) are Extracellular-facing. Residues 260–280 (VLVVLHGIGNTFQGGANCIMF) form a helical membrane-spanning segment. Topologically, residues 281–330 (VLCTRAVRTRLFSLCCCCPRPSTQSPPGAPTPPKIGESQESRRTPEVPST) are cytoplasmic. The interval 301-330 (PSTQSPPGAPTPPKIGESQESRRTPEVPST) is disordered. A compositionally biased stretch (basic and acidic residues) spans 317–330 (ESQESRRTPEVPST).

Belongs to the G-protein coupled receptor 2 family. In terms of tissue distribution, expressed in the primary cilia of radial glial progenitors (RGPs) in the developing neocortex.

Its subcellular location is the cell projection. The protein localises to the cilium membrane. Functionally, orphan receptor that promotes neuronal differentiation of radial glial progenitors (RGPs). The activity of this receptor is mediated by a G(q)-protein that activates a phosphatidylinositol-calcium second messenger. In Mus musculus (Mouse), this protein is G-protein coupled receptor 157 (Gpr157).